Here is a 447-residue protein sequence, read N- to C-terminus: Probable ribosomal RNA small subunit methyltransferase B (447 aa).

S-adenosyl-L-methionine is bound by residues 259–265, Asp-283, Asp-310, and Asp-329; that span reads CAAPGGK. Cys-382 functions as the Nucleophile in the catalytic mechanism.

This sequence belongs to the class I-like SAM-binding methyltransferase superfamily. RsmB/NOP family.

It localises to the cytoplasm. It catalyses the reaction cytidine(967) in 16S rRNA + S-adenosyl-L-methionine = 5-methylcytidine(967) in 16S rRNA + S-adenosyl-L-homocysteine + H(+). In terms of biological role, specifically methylates the cytosine at position 967 (m5C967) of 16S rRNA. This Bacillus subtilis (strain 168) protein is Probable ribosomal RNA small subunit methyltransferase B.